The sequence spans 313 residues: Small ribosomal subunit biogenesis GTPase RsgA (313 aa).

Residues 82–235 (REKLIAANAT…IIDSPGIQQF (154 aa)) enclose the CP-type G domain. GTP is bound by residues 127–130 (NKTD) and 177–185 (GQSGMGKST). Residues Cys259, Cys264, His266, and Cys272 each coordinate Zn(2+).

Belongs to the TRAFAC class YlqF/YawG GTPase family. RsgA subfamily. In terms of assembly, monomer. Associates with 30S ribosomal subunit, binds 16S rRNA. It depends on Zn(2+) as a cofactor.

Its subcellular location is the cytoplasm. In terms of biological role, one of several proteins that assist in the late maturation steps of the functional core of the 30S ribosomal subunit. Helps release RbfA from mature subunits. May play a role in the assembly of ribosomal proteins into the subunit. Circularly permuted GTPase that catalyzes slow GTP hydrolysis, GTPase activity is stimulated by the 30S ribosomal subunit. This Nitrosospira multiformis (strain ATCC 25196 / NCIMB 11849 / C 71) protein is Small ribosomal subunit biogenesis GTPase RsgA.